Here is a 297-residue protein sequence, read N- to C-terminus: Urease accessory protein UreD (297 aa).

The protein belongs to the UreD family. In terms of assembly, ureD, UreF and UreG form a complex that acts as a GTP-hydrolysis-dependent molecular chaperone, activating the urease apoprotein by helping to assemble the nickel containing metallocenter of UreC. The UreE protein probably delivers the nickel.

The protein resides in the cytoplasm. Functionally, required for maturation of urease via the functional incorporation of the urease nickel metallocenter. This chain is Urease accessory protein UreD, found in Anaeromyxobacter sp. (strain Fw109-5).